A 451-amino-acid chain; its full sequence is Clusterin (451 aa).

The first 18 residues, 1 to 18, serve as a signal peptide directing secretion; the sequence is MELPLLALLSLGLVCQGG. Disulfide bonds link cysteine 98–cysteine 314, cysteine 109–cysteine 306, cysteine 112–cysteine 303, cysteine 117–cysteine 296, and cysteine 125–cysteine 286. N-linked (GlcNAc...) asparagine glycosylation is found at asparagine 99, asparagine 141, asparagine 278, asparagine 355, asparagine 375, and asparagine 447.

It belongs to the clusterin family. In terms of assembly, antiparallel disulfide-linked heterodimer of an alpha chain and a beta chain. Self-associates and forms higher oligomers. Interacts with a broad range of misfolded proteins. Post-translationally, proteolytically cleaved on its way through the secretory system, probably within the Golgi lumen. In terms of processing, polyubiquitinated, leading to proteasomal degradation.

It localises to the secreted. Its subcellular location is the cytoplasmic vesicle. The protein resides in the secretory vesicle. The protein localises to the chromaffin granule. It is found in the nucleus. It localises to the cytoplasm. Its subcellular location is the mitochondrion membrane. The protein resides in the cytosol. The protein localises to the endoplasmic reticulum. Functions as extracellular chaperone that prevents aggregation of nonnative proteins. Prevents stress-induced aggregation of blood plasma proteins. Does not require ATP. Maintains partially unfolded proteins in a state appropriate for subsequent refolding by other chaperones, such as HSPA8/HSC70. Does not refold proteins by itself. Binding to cell surface receptors triggers internalization of the chaperone-client complex and subsequent lysosomal or proteasomal degradation. When secreted, protects cells against apoptosis and against cytolysis by complement: inhibits assembly of the complement membrane attack complex (MAC) by preventing polymerization of C9 pore component of the MAC complex. Intracellular forms interact with ubiquitin and SCF (SKP1-CUL1-F-box protein) E3 ubiquitin-protein ligase complexes and promote the ubiquitination and subsequent proteasomal degradation of target proteins. Modulates NF-kappa-B transcriptional activity. Promotes apoptosis when in the nucleus. Inhibits apoptosis when associated with the mitochondrial membrane by interference with BAX-dependent release of cytochrome c into the cytoplasm. Plays a role in the regulation of cell proliferation. This Coturnix japonica (Japanese quail) protein is Clusterin (CLU).